The following is a 1099-amino-acid chain: ATP-dependent helicase/deoxyribonuclease subunit B (1099 aa).

The [4Fe-4S] cluster site is built by Cys-766, Cys-1056, Cys-1059, and Cys-1065.

Belongs to the helicase family. AddB/RexB type 2 subfamily. Heterodimer of AddA and RexB. Requires Mg(2+) as cofactor. The cofactor is [4Fe-4S] cluster.

Functionally, the heterodimer acts as both an ATP-dependent DNA helicase and an ATP-dependent, dual-direction single-stranded exonuclease. Recognizes the chi site generating a DNA molecule suitable for the initiation of homologous recombination. This subunit has 5' -&gt; 3' nuclease activity but not helicase activity. This chain is ATP-dependent helicase/deoxyribonuclease subunit B, found in Lactococcus lactis subsp. cremoris (strain SK11).